The following is a 155-amino-acid chain: MADNPIYQKLGQLGQHTVQPASPEEAQLERVENPHSGTLYLTRFVAPEFTSLCPVTGQPDFAHLVIDYAPGPWLVESKSLKLYLTSFRNHGAFHEECTVSIGKKIFDFTEATWLRISGYWYPRGGIPIDVFWQSGDVPKGLYVPDTGVASYRGRG.

The active-site Thioimide intermediate is Cys53. The active-site Proton donor is Asp60. Substrate is bound by residues 75 to 77 (VES) and 94 to 95 (HE).

It belongs to the GTP cyclohydrolase I family. QueF type 1 subfamily.

Its subcellular location is the cytoplasm. It carries out the reaction 7-aminomethyl-7-carbaguanine + 2 NADP(+) = 7-cyano-7-deazaguanine + 2 NADPH + 3 H(+). The protein operates within tRNA modification; tRNA-queuosine biosynthesis. Catalyzes the NADPH-dependent reduction of 7-cyano-7-deazaguanine (preQ0) to 7-aminomethyl-7-deazaguanine (preQ1). The chain is NADPH-dependent 7-cyano-7-deazaguanine reductase from Hyphomonas neptunium (strain ATCC 15444).